A 190-amino-acid chain; its full sequence is dTTP/UTP pyrophosphatase (190 aa).

D71 serves as the catalytic Proton acceptor.

This sequence belongs to the Maf family. YhdE subfamily. It depends on a divalent metal cation as a cofactor.

The protein localises to the cytoplasm. The enzyme catalyses dTTP + H2O = dTMP + diphosphate + H(+). The catalysed reaction is UTP + H2O = UMP + diphosphate + H(+). Its function is as follows. Nucleoside triphosphate pyrophosphatase that hydrolyzes dTTP and UTP. May have a dual role in cell division arrest and in preventing the incorporation of modified nucleotides into cellular nucleic acids. The polypeptide is dTTP/UTP pyrophosphatase (Xanthomonas oryzae pv. oryzae (strain MAFF 311018)).